The following is a 141-amino-acid chain: VLSPADKTNVKAAWGKVGAHAGDYGAEALERMFLSFPTTKTYFPHFDLSHGSAZVKGHGKKVAKALTBAVZHLDDMPNALSALSBLHAHKLRVBPVBFKLLNHCLLVTLAABFPSZFTPAVHASVDKFLASVSTVLTSKYR.

Residues 1 to 141 (VLSPADKTNV…VSTVLTSKYR (141 aa)) enclose the Globin domain. H58 contributes to the O2 binding site. A heme b-binding site is contributed by H87.

This sequence belongs to the globin family. As to quaternary structure, heterotetramer of two alpha chains and two beta chains. As to expression, red blood cells.

In terms of biological role, involved in oxygen transport from the lung to the various peripheral tissues. The chain is Hemoglobin subunit alpha-3 from Gorilla gorilla gorilla (Western lowland gorilla).